The sequence spans 37 residues: Large ribosomal subunit protein bL36 (37 aa).

It belongs to the bacterial ribosomal protein bL36 family.

This is Large ribosomal subunit protein bL36 from Treponema pallidum (strain Nichols).